The sequence spans 932 residues: MDGYNQQQQQQQQQQQQHQMNLGSSGGILHSPQQQQQQQQQQQQQQQQPMNGSNNQLLGISNGGFGTMLQQSASLPINIQGSNSFSTFTPLSADDSNLKKRKIKNEDGTYSEIPYSPNSLVGSNGGLDSSFLMLQQQLQDQQQQIAQFNSSVNSPSFSLNSSQVNNNNNNNNNINNNNNSNNNINNNNSNNNINNNNNNNNNNNNNINNNNINNNNNYNNNNNNNNHNHLQTTTTTTTNNGLTINANNTPSQLSSSSLYPGIIPQISITNTQSGYTPRSISPNPSPNLSPTNSPIQSPHLPTDNYLMIGSENENSDPPSPMTQYNENPPFTWTDYKSEPWYTTFNTNGDEMPVPLLNIMASKGFSYIGGQWIYCRRNHFQLDITAVYPKLFQETQYGHNGVTLSNSSSSVDPTQTPSYMLISGVKTPINGLTLTIKGIKNRADMSQQESEVELFQTNSKREKQGEHAPKPVAIQFGSLVSIQRLHFRKATLNNARRHGQPNPHQEFNQLVVSLYGRCMGQEYCIVSYVSPALIVRTATQVTPPGDLSPVHTPDYAGTSSNNGGGSNNMNCFGPTISNIDFSTMNIVSPGHSPTSPRPLSQLTSQGQTNILRLTQNHNNNNNNNNNNNNNNNNNNNNNNNNNINNNNNSNNNSLGNINNNNSNMLTSSSLLNGRINCFNNNINNNNNNQHNNNNQHNNNNNHHNINNQHNNQNNNNNNNNNNKCHWNSGDTEKSIVYNGKVGINVENPAYALSVQGTIYASEGVYHPSDLRIKYDLKSIDSKSNLDNVNRMKLYDYKYNPQWTHMNGRDPYLDNCDRGVIAQDLQRILPNAVRTIGNKNVNGQEIENLLVIKNEALVMETIGATQELSKQMDEMKLKLITYESKLKNLKKKSKNQTILLIIFMITFLLVALYMYKPSTHHSHHRRHNFDNNDN.

Composition is skewed to low complexity over residues 1–19 and 33–48; these read MDGY…QQHQ and QQQQ…QQQQ. 7 disordered regions span residues 1–63, 152–256, 269–328, 540–568, 582–601, 613–660, and 680–726; these read MDGY…ISNG, VNSP…LSSS, TNTQ…NENP, VTPP…SNNM, TMNI…LSQL, TQNH…NNNN, and NINN…CHWN. The span at 49–59 shows a compositional bias: polar residues; that stretch reads PMNGSNNQLLG. A coiled-coil region spans residues 127–154; that stretch reads LDSSFLMLQQQLQDQQQQIAQFNSSVNS. Low complexity-rich tracts occupy residues 152-249 and 277-294; these read VNSP…ANNT and PRSI…TNSP. A DNA-binding region (NDT80) is located at residues 286–546; the sequence is PNLSPTNSPI…ATQVTPPGDL (261 aa). Residues 311–328 show a composition bias toward polar residues; sequence ENENSDPPSPMTQYNENP. Low complexity-rich tracts occupy residues 615 to 660 and 680 to 721; these read NHNN…NNNN and NINN…NNNN. Positions 767–877 constitute a Peptidase S74 domain; that stretch reads SDLRIKYDLK…KQMDEMKLKL (111 aa). A coiled-coil region spans residues 863–895; the sequence is TQELSKQMDEMKLKLITYESKLKNLKKKSKNQT. A helical membrane pass occupies residues 895–915; that stretch reads TILLIIFMITFLLVALYMYKP.

It is found in the membrane. Transcription factor which acts as a key regulator of pstA (prestalk-A) cells differentiation. Essential for ecmA-specific gene expression. This chain is Myelin gene regulatory factor-like A (mrfA), found in Dictyostelium discoideum (Social amoeba).